The sequence spans 215 residues: Endoplasmic reticulum vesicle protein 25 (215 aa).

The signal sequence occupies residues 1-21 (MQSLITYIALVFSLFVSSAIG). Residues 22 to 184 (LHLEVPALPN…TNESTNSRVK (163 aa)) are Lumenal-facing. Residues 34-125 (PVCIRDFVQE…VRSVELDIES (92 aa)) form the GOLD domain. A helical membrane pass occupies residues 185–205 (WFSIVVIASLVGFGVWQIQYL). Residues 206 to 215 (RHYFKVKHII) lie on the Cytoplasmic side of the membrane.

It belongs to the EMP24/GP25L family.

It is found in the endoplasmic reticulum membrane. The protein localises to the golgi apparatus membrane. Constituent of COPII-coated endoplasmic reticulum-derived transport vesicles. Required for efficient transport of a subset of secretory proteins to the Golgi. Facilitates retrograde transport from the Golgi to the endoplasmic reticulum. This chain is Endoplasmic reticulum vesicle protein 25 (ERV25), found in Candida albicans (strain SC5314 / ATCC MYA-2876) (Yeast).